Reading from the N-terminus, the 402-residue chain is Type II NADH:quinone oxidoreductase (402 aa).

FAD contacts are provided by residues Gly-12–Ala-16, Asn-39–Lys-40, and Val-83. The active site involves Glu-172. Residues Asp-302, Ala-319–Gln-320, and Lys-379 contribute to the FAD site.

This sequence belongs to the NADH dehydrogenase family. FAD is required as a cofactor.

Its subcellular location is the cell membrane. It catalyses the reaction a quinone + NADH + H(+) = a quinol + NAD(+). In terms of biological role, alternative, nonproton pumping NADH:quinone oxidoreductase that delivers electrons to the respiratory chain by oxidation of NADH and reduction of quinones, and contributes to the regeneration of NAD(+). The polypeptide is Type II NADH:quinone oxidoreductase (Staphylococcus saprophyticus subsp. saprophyticus (strain ATCC 15305 / DSM 20229 / NCIMB 8711 / NCTC 7292 / S-41)).